A 305-amino-acid polypeptide reads, in one-letter code: Glutaminase (305 aa).

Residues Ser-61, Asn-113, Glu-158, Asn-165, Tyr-189, Tyr-241, and Val-259 each coordinate substrate.

The protein belongs to the glutaminase family. Homotetramer.

The enzyme catalyses L-glutamine + H2O = L-glutamate + NH4(+). In Alkaliphilus metalliredigens (strain QYMF), this protein is Glutaminase.